Reading from the N-terminus, the 456-residue chain is Perilipin-5 (456 aa).

The segment at 1 to 20 (MSEDEAAQAPGPSLSEQDQQ) is disordered. The interaction with LIPE stretch occupies residues 1 to 108 (MSEDEAAQAP…KLEEKLPFLQ (108 aa)). The tract at residues 1–173 (MSEDEAAQAP…HFLPMTEEEL (173 aa)) is essential for lipid droplet targeting. Ser2, Ser148, and Ser324 each carry phosphoserine. Residues 185–456 (VGSVEEQRKH…KHTLMPELDF (272 aa)) are interaction with PNPLA2 and ABHD5. The interval 420–456 (AWQAQHGEGTVLSGNIPEEEPEPPSRPKHTLMPELDF) is disordered. The interval 438 to 456 (EEPEPPSRPKHTLMPELDF) is recruits mitochondria at the lipid droplet surface.

The protein belongs to the perilipin family. In terms of assembly, homooligomer. Interacts with PNPLA2; prevents interaction of PNPLA2 with ABHD5. Interacts with ABHD5; targets ABHD5 to lipid droplets and promotes interaction of ABHD5 with PNPLA2. Interacts with LIPE. Post-translationally, phosphorylated by PKA. Phosphorylated on serine in skeletal muscle at rest or upon lipolytic stimulation.

The protein localises to the lipid droplet. It localises to the cytoplasm. Its subcellular location is the mitochondrion. In terms of biological role, lipid droplet-associated protein that maintains the balance between lipogenesis and lipolysis and also regulates fatty acid oxidation in oxidative tissues. Recruits mitochondria to the surface of lipid droplets and is involved in lipid droplet homeostasis by regulating both the storage of fatty acids in the form of triglycerides and the release of fatty acids for mitochondrial fatty acid oxidation. In lipid droplet triacylglycerol hydrolysis, plays a role as a scaffolding protein for three major key lipolytic players: ABHD5, PNPLA2 and LIPE. Reduces the triacylglycerol hydrolase activity of PNPLA2 by recruiting and sequestering PNPLA2 to lipid droplets. Phosphorylation by PKA enables lipolysis probably by promoting release of ABHD5 from the perilipin scaffold and by facilitating interaction of ABHD5 with PNPLA2. Also increases lipolysis through interaction with LIPE and upon PKA-mediated phosphorylation of LIPE. The polypeptide is Perilipin-5 (Plin5) (Ovis aries (Sheep)).